A 91-amino-acid polypeptide reads, in one-letter code: Probable Fe(2+)-trafficking protein (91 aa).

Belongs to the Fe(2+)-trafficking protein family.

In terms of biological role, could be a mediator in iron transactions between iron acquisition and iron-requiring processes, such as synthesis and/or repair of Fe-S clusters in biosynthetic enzymes. The chain is Probable Fe(2+)-trafficking protein from Acidobacterium capsulatum (strain ATCC 51196 / DSM 11244 / BCRC 80197 / JCM 7670 / NBRC 15755 / NCIMB 13165 / 161).